We begin with the raw amino-acid sequence, 33 residues long: Mu-theraphotoxin-Osp1b (33 aa).

3 disulfides stabilise this stretch: Cys2/Cys17, Cys9/Cys22, and Cys16/Cys29.

The protein belongs to the neurotoxin 10 (Hwtx-1) family. 22 (Htx-4) subfamily. As to expression, expressed by the venom gland.

It localises to the secreted. In terms of biological role, voltage-gated sodium channel Nav1.7/SCN9A inhibitor. The polypeptide is Mu-theraphotoxin-Osp1b (Orphnaecus sp. (strain Maanghit-Cave/Philippines) (Tarantula spider)).